We begin with the raw amino-acid sequence, 1169 residues long: Transcription-repair-coupling factor (1169 aa).

Residues 634-795 (DMERARPMDR…MLGVRDLSVI (162 aa)) form the Helicase ATP-binding domain. 647-654 (GDVGYGKT) serves as a coordination point for ATP. A DEEQ box motif is present at residues 748–751 (DEEQ). Residues 809–970 (VLEQNTNFIK…GFKIAMRDLN (162 aa)) enclose the Helicase C-terminal domain.

The protein in the N-terminal section; belongs to the UvrB family. In the C-terminal section; belongs to the helicase family. RecG subfamily.

It is found in the cytoplasm. In terms of biological role, couples transcription and DNA repair by recognizing RNA polymerase (RNAP) stalled at DNA lesions. Mediates ATP-dependent release of RNAP and its truncated transcript from the DNA, and recruitment of nucleotide excision repair machinery to the damaged site. The sequence is that of Transcription-repair-coupling factor from Staphylococcus epidermidis (strain ATCC 12228 / FDA PCI 1200).